Consider the following 60-residue polypeptide: Large ribosomal subunit protein bL32 (60 aa).

The segment at 1-60 (MAVQQNKKTPSKRGMHRSHDFLVAPQLSVEPTTGETHMRHHISPNGFYRGRKVLKTKNDE) is disordered. Positions 49-60 (RGRKVLKTKNDE) are enriched in basic residues.

The protein belongs to the bacterial ribosomal protein bL32 family.

The sequence is that of Large ribosomal subunit protein bL32 from Janthinobacterium sp. (strain Marseille) (Minibacterium massiliensis).